Here is a 64-residue protein sequence, read N- to C-terminus: Large ribosomal subunit protein bL35 (64 aa).

Belongs to the bacterial ribosomal protein bL35 family.

The polypeptide is Large ribosomal subunit protein bL35 (Desulforamulus reducens (strain ATCC BAA-1160 / DSM 100696 / MI-1) (Desulfotomaculum reducens)).